Here is a 304-residue protein sequence, read N- to C-terminus: L-lactate dehydrogenase (304 aa).

Residues Val11, Asp32, Arg37, and 76–77 contribute to the NAD(+) site; that span reads GA. Substrate is bound by residues Gln79, Arg85, and 117-120; that span reads NPVD. Ser138 provides a ligand contact to NAD(+). 143–146 provides a ligand contact to substrate; that stretch reads DSAR. 2 residues coordinate beta-D-fructose 1,6-bisphosphate: Arg148 and His163. Residue His170 is the Proton acceptor of the active site. Thr225 is a substrate binding site.

It belongs to the LDH/MDH superfamily. LDH family. As to quaternary structure, homotetramer.

The protein resides in the cytoplasm. It catalyses the reaction (S)-lactate + NAD(+) = pyruvate + NADH + H(+). Its pathway is fermentation; pyruvate fermentation to lactate; (S)-lactate from pyruvate: step 1/1. With respect to regulation, allosterically activated by fructose 1,6-bisphosphate (FBP). Its function is as follows. Catalyzes the conversion of lactate to pyruvate. This is L-lactate dehydrogenase from Deinococcus radiodurans (strain ATCC 13939 / DSM 20539 / JCM 16871 / CCUG 27074 / LMG 4051 / NBRC 15346 / NCIMB 9279 / VKM B-1422 / R1).